Reading from the N-terminus, the 361-residue chain is Myricetin 3-O-methyltransferase 3 (361 aa).

Aspartate 229 contacts S-adenosyl-L-methionine. Histidine 267 acts as the Proton acceptor in catalysis.

It belongs to the class I-like SAM-binding methyltransferase superfamily. Cation-independent O-methyltransferase family. In terms of assembly, homodimer. Mainly expressed in leaves secreting glandular trichomes types 1 and 4 and, to a lesser extent, in storage trichomes type 6.

The enzyme catalyses kaempferol + S-adenosyl-L-methionine = 3-O-methylkaempferol + S-adenosyl-L-homocysteine + H(+). It catalyses the reaction quercetin + S-adenosyl-L-methionine = 3',4',5,7-tetrahydroxy-3-methoxyflavone + S-adenosyl-L-homocysteine + H(+). The catalysed reaction is myricetin + S-adenosyl-L-methionine = 3-O-methylmyricetin + S-adenosyl-L-homocysteine + H(+). It carries out the reaction kaempferide + S-adenosyl-L-methionine = 3,4'-O-dimethylkaempferol + S-adenosyl-L-homocysteine + H(+). The enzyme catalyses isorhamnetin + S-adenosyl-L-methionine = 3,3'-O-dimethylquercetin + S-adenosyl-L-homocysteine + H(+). It catalyses the reaction rhamnetin + S-adenosyl-L-methionine = 3',4',5-trihydroxy-3,7-dimethoxyflavone + S-adenosyl-L-homocysteine + H(+). The catalysed reaction is laricitrin + S-adenosyl-L-methionine = 3,3'-O-dimethylmyricetin + S-adenosyl-L-homocysteine + H(+). It carries out the reaction syringetin + S-adenosyl-L-methionine = 3,3',5'-O-trimethylmyricetin + S-adenosyl-L-homocysteine + H(+). Its pathway is flavonoid metabolism. Flavonoid 3-O-methyltransferase involved in the biosynthesis of polymethoxylated flavonoids natural products such as myricetin derivatives, aroma compounds possessing antioxidant properties and exhibiting pharmacological activities such as anti-carcinogen, anti-viral, anti-thrombotic, anti-diabetic, anti-atherosclerotic, and anti-inflammatory effects. Catalyzes S-adenosylmethionine-dependent regioselective 3-O-methylation of flavonoids; active on various hydroxylated flavonoid substrates. Active with myricetin, quercetin, kaempferol, 4'-methyl kaempferol (kaempferide), 3'-methyl quercetin (isorhamnetin), 7-methyl quercetin (rhamnetin), 3'-methyl myricetin (laricitrin) and 3',5'-dimethyl myricetin (syringetin), thus producing 3-methyl myricetin, 3-methyl quercetin, 3-methyl kaempferol, 4',3-methyl kaempferol, 3',3-methyl quercetin, 7,3-dimethyl quercetin, 3',3-dimethyl myricetin and 3',5',3-dimethyl myricetin, respectively. Inactive with flavonol substrates methylated at the 3-hydroxyl position such as 3-O-methyl quercetin. This is Myricetin 3-O-methyltransferase 3 from Solanum habrochaites (Wild tomato).